Reading from the N-terminus, the 465-residue chain is Phospholipase A1-II 5 (465 aa).

The active-site Acyl-ester intermediate is S233. Catalysis depends on charge relay system residues S233, D297, and H336.

Belongs to the AB hydrolase superfamily. Lipase family.

It is found in the cytoplasm. Functionally, acylhydrolase that catalyzes the hydrolysis of phospholipids at the sn-1 position. This chain is Phospholipase A1-II 5, found in Oryza sativa subsp. indica (Rice).